Here is a 570-residue protein sequence, read N- to C-terminus: Urease subunit alpha (570 aa).

The Urease domain maps to 131 to 570; the sequence is GGMDSHIHFI…LPMAQRYFLF (440 aa). Ni(2+)-binding residues include His-136, His-138, and Lys-219. N6-carboxylysine is present on Lys-219. His-221 serves as a coordination point for substrate. Positions 248 and 274 each coordinate Ni(2+). The Proton donor role is filled by His-322. Asp-362 contributes to the Ni(2+) binding site.

The protein belongs to the metallo-dependent hydrolases superfamily. Urease alpha subunit family. Heterotrimer of UreA (gamma), UreB (beta) and UreC (alpha) subunits. Three heterotrimers associate to form the active enzyme. It depends on Ni cation as a cofactor. In terms of processing, carboxylation allows a single lysine to coordinate two nickel ions.

The protein resides in the cytoplasm. It carries out the reaction urea + 2 H2O + H(+) = hydrogencarbonate + 2 NH4(+). It functions in the pathway nitrogen metabolism; urea degradation; CO(2) and NH(3) from urea (urease route): step 1/1. This chain is Urease subunit alpha, found in Sinorhizobium medicae (strain WSM419) (Ensifer medicae).